Here is a 96-residue protein sequence, read N- to C-terminus: UPF0235 protein YPK_0828 (96 aa).

It belongs to the UPF0235 family.

The polypeptide is UPF0235 protein YPK_0828 (Yersinia pseudotuberculosis serotype O:3 (strain YPIII)).